The following is a 383-amino-acid chain: Succinyl-diaminopimelate desuccinylase (383 aa).

Residue H69 coordinates Zn(2+). D71 is a catalytic residue. D103 provides a ligand contact to Zn(2+). E137 (proton acceptor) is an active-site residue. 3 residues coordinate Zn(2+): E138, E166, and H357.

This sequence belongs to the peptidase M20A family. DapE subfamily. In terms of assembly, homodimer. The cofactor is Zn(2+). Co(2+) serves as cofactor.

It catalyses the reaction N-succinyl-(2S,6S)-2,6-diaminopimelate + H2O = (2S,6S)-2,6-diaminopimelate + succinate. It functions in the pathway amino-acid biosynthesis; L-lysine biosynthesis via DAP pathway; LL-2,6-diaminopimelate from (S)-tetrahydrodipicolinate (succinylase route): step 3/3. Its function is as follows. Catalyzes the hydrolysis of N-succinyl-L,L-diaminopimelic acid (SDAP), forming succinate and LL-2,6-diaminopimelate (DAP), an intermediate involved in the bacterial biosynthesis of lysine and meso-diaminopimelic acid, an essential component of bacterial cell walls. The polypeptide is Succinyl-diaminopimelate desuccinylase (Rickettsia typhi (strain ATCC VR-144 / Wilmington)).